The chain runs to 286 residues: Beta-lactamase SHV-46 (286 aa).

A signal peptide spans 1-21; sequence MRYIRLCIISLLATLPLAVHA. Ser-66 functions as the Acyl-ester intermediate in the catalytic mechanism. A disulfide bridge links Cys-73 with Cys-119. Glu-164 serves as the catalytic Proton acceptor. 230–232 is a substrate binding site; that stretch reads KTG.

It belongs to the class-A beta-lactamase family.

It catalyses the reaction a beta-lactam + H2O = a substituted beta-amino acid. The protein is Beta-lactamase SHV-46 (bla) of Klebsiella oxytoca.